A 146-amino-acid chain; its full sequence is Leptin (146 aa).

A disulfide bridge connects residues Cys-96 and Cys-146.

Belongs to the leptin family.

Its subcellular location is the secreted. Key player in the regulation of energy balance and body weight control. Once released into the circulation, has central and peripheral effects by binding LEPR, found in many tissues, which results in the activation of several major signaling pathways. In the hypothalamus, acts as an appetite-regulating factor that induces a decrease in food intake and an increase in energy consumption by inducing anorexinogenic factors and suppressing orexigenic neuropeptides, also regulates bone mass and secretion of hypothalamo-pituitary-adrenal hormones. In the periphery, increases basal metabolism, influences reproductive function, regulates pancreatic beta-cell function and insulin secretion, is pro-angiogenic for endothelial cell and affects innate and adaptive immunity. In the arcuate nucleus of the hypothalamus, activates by depolarization POMC neurons inducing FOS and SOCS3 expression to release anorexigenic peptides and inhibits by hyperpolarization NPY neurons inducing SOCS3 with a consequent reduction on release of orexigenic peptides. In addition to its known satiety inducing effect, has a modulatory role in nutrient absorption. In the intestine, reduces glucose absorption by enterocytes by activating PKC and leading to a sequential activation of p38, PI3K and ERK signaling pathways which exerts an inhibitory effect on glucose absorption. Acts as a growth factor on certain tissues, through the activation of different signaling pathways increases expression of genes involved in cell cycle regulation such as CCND1, via JAK2-STAT3 pathway, or VEGFA, via MAPK1/3 and PI3K-AKT1 pathways. May also play an apoptotic role via JAK2-STAT3 pathway and up-regulation of BIRC5 expression. Pro-angiogenic, has mitogenic activity on vascular endothelial cells and plays a role in matrix remodeling by regulating the expression of matrix metalloproteinases (MMPs) and tissue inhibitors of metalloproteinases (TIMPs). In innate immunity, modulates the activity and function of neutrophils by increasing chemotaxis and the secretion of oxygen radicals. Increases phagocytosis by macrophages and enhances secretion of pro-inflammatory mediators. Increases cytotoxic ability of NK cells. Plays a pro-inflammatory role, in synergy with IL1B, by inducing NOS2 which promotes the production of IL6, IL8 and Prostaglandin E2, through a signaling pathway that involves JAK2, PI3K, MAP2K1/MEK1 and MAPK14/p38. In adaptive immunity, promotes the switch of memory T-cells towards T helper-1 cell immune responses. Increases CD4(+)CD25(-) T-cell proliferation and reduces autophagy during TCR (T-cell receptor) stimulation, through MTOR signaling pathway activation and BCL2 up-regulation. This Pongo pygmaeus (Bornean orangutan) protein is Leptin (LEP).